Consider the following 85-residue polypeptide: U4-theraphotoxin-Hhn1a (85 aa).

The signal sequence occupies residues 1–22 (MKVTLIAILTCAAVLVLHTTAA). A propeptide spanning residues 23 to 48 (EELEAESQLMEVGMPDTELEAVDEER) is cleaved from the precursor. 3 disulfide bridges follow: cysteine 52–cysteine 66, cysteine 56–cysteine 77, and cysteine 71–cysteine 82.

It belongs to the neurotoxin 12 (Hwtx-2) family. 02 (Hwtx-2) subfamily. Monomer. Expressed by the venom gland.

The protein resides in the secreted. Neurotoxin active on both insects and mammals. This Cyriopagopus hainanus (Chinese bird spider) protein is U4-theraphotoxin-Hhn1a.